A 119-amino-acid polypeptide reads, in one-letter code: Large ribosomal subunit protein bL20 (119 aa).

It belongs to the bacterial ribosomal protein bL20 family.

Binds directly to 23S ribosomal RNA and is necessary for the in vitro assembly process of the 50S ribosomal subunit. It is not involved in the protein synthesizing functions of that subunit. The sequence is that of Large ribosomal subunit protein bL20 from Polaromonas sp. (strain JS666 / ATCC BAA-500).